Reading from the N-terminus, the 561-residue chain is Urocanate hydratase (561 aa).

NAD(+) is bound by residues 52–53 (GG), Gln130, 176–178 (GMG), Glu196, Arg201, 242–243 (NA), 263–267 (QTSAH), 273–274 (YL), and Tyr322. Cys410 is an active-site residue. Gly492 lines the NAD(+) pocket.

Belongs to the urocanase family. It depends on NAD(+) as a cofactor.

The protein resides in the cytoplasm. It catalyses the reaction 4-imidazolone-5-propanoate = trans-urocanate + H2O. The protein operates within amino-acid degradation; L-histidine degradation into L-glutamate; N-formimidoyl-L-glutamate from L-histidine: step 2/3. Its function is as follows. Catalyzes the conversion of urocanate to 4-imidazolone-5-propionate. The polypeptide is Urocanate hydratase (Salmonella arizonae (strain ATCC BAA-731 / CDC346-86 / RSK2980)).